The sequence spans 142 residues: Galactose-6-phosphate isomerase subunit LacA 2 (142 aa).

It belongs to the LacAB/RpiB family. As to quaternary structure, heteromultimeric protein consisting of LacA and LacB.

The catalysed reaction is aldehydo-D-galactose 6-phosphate = keto-D-tagatose 6-phosphate. The protein operates within carbohydrate metabolism; D-galactose 6-phosphate degradation; D-tagatose 6-phosphate from D-galactose 6-phosphate: step 1/1. In Streptococcus pyogenes serotype M1, this protein is Galactose-6-phosphate isomerase subunit LacA 2.